The sequence spans 652 residues: DNA ligase (652 aa).

NAD(+) contacts are provided by residues 29–33 (DAEYD), 78–79 (SL), and glutamate 107. Lysine 109 serves as the catalytic N6-AMP-lysine intermediate. The NAD(+) site is built by arginine 130, glutamate 164, lysine 278, and lysine 302. Residues cysteine 395, cysteine 398, cysteine 413, and cysteine 418 each contribute to the Zn(2+) site. Positions 577–652 (TDDAILSGKT…VKDEAWLLDL (76 aa)) constitute a BRCT domain.

The protein belongs to the NAD-dependent DNA ligase family. LigA subfamily. Mg(2+) is required as a cofactor. It depends on Mn(2+) as a cofactor.

It carries out the reaction NAD(+) + (deoxyribonucleotide)n-3'-hydroxyl + 5'-phospho-(deoxyribonucleotide)m = (deoxyribonucleotide)n+m + AMP + beta-nicotinamide D-nucleotide.. In terms of biological role, DNA ligase that catalyzes the formation of phosphodiester linkages between 5'-phosphoryl and 3'-hydroxyl groups in double-stranded DNA using NAD as a coenzyme and as the energy source for the reaction. It is essential for DNA replication and repair of damaged DNA. This chain is DNA ligase, found in Streptococcus thermophilus (strain ATCC BAA-491 / LMD-9).